We begin with the raw amino-acid sequence, 321 residues long: Glucokinase (321 aa).

Residue 8–13 coordinates ATP; sequence GDVGGT.

The protein belongs to the bacterial glucokinase family.

It localises to the cytoplasm. It catalyses the reaction D-glucose + ATP = D-glucose 6-phosphate + ADP + H(+). The protein is Glucokinase of Salmonella typhi.